Consider the following 261-residue polypeptide: Matrix metalloproteinase-26 (261 aa).

The N-terminal stretch at 1–17 (MQLVILRVTIFLPWCFA) is a signal peptide. Residues 18–89 (VPVPPAADHK…PHCGVPDGSD (72 aa)) constitute a propeptide that is removed on maturation. Asn64 is a glycosylation site (N-linked (GlcNAc...) asparagine). A Cysteine switch motif is present at residues 80–87 (PHCGVPDG). Positions 82 and 208 each coordinate Zn(2+). Residue Glu209 is part of the active site. Residues His212 and His218 each contribute to the Zn(2+) site. Asn221 carries an N-linked (GlcNAc...) asparagine glycan.

It belongs to the peptidase M10A family. Zn(2+) is required as a cofactor. Ca(2+) serves as cofactor. As to expression, expressed specifically in uterus and placenta. Is also widely expressed in malignant tumors from different sources as well as in diverse tumor cell lines.

The protein resides in the secreted. It localises to the extracellular space. It is found in the extracellular matrix. Functionally, may hydrolyze collagen type IV, fibronectin, fibrinogen, beta-casein, type I gelatin and alpha-1 proteinase inhibitor. Is also able to activate progelatinase B. This chain is Matrix metalloproteinase-26 (MMP26), found in Homo sapiens (Human).